The primary structure comprises 388 residues: Staphopain A (388 aa).

A signal peptide spans 1-25 (MKRNFPKLIALSLIFSLSITPIANA). A propeptide spanning residues 26-214 (ESNSNIKAKD…TSQFKSNNYT (189 aa)) is cleaved from the precursor. Residues C238, H334, and N355 contribute to the active site.

This sequence belongs to the peptidase C47 family. As to quaternary structure, in the cytoplasm, prematurely activated/folded ScpA forms a stable non-covalent complex with ScpB. In terms of processing, cleavage leads to the activation of ScpA probably by an auto-catalytic manner.

Its subcellular location is the secreted. It carries out the reaction Broad endopeptidase action on proteins including elastin, but rather limited hydrolysis of small-molecule substrates. Assays are conveniently made with hemoglobin, casein or Z-Phe-Arg-NHMec as substrate.. Its activity is regulated as follows. Prematurely activated/folded staphopain A is inhibited by staphostatin A (ScpB), which is probably required to protect staphylococcal cytoplasmic proteins from degradation by ScpA. Also inactivated by heavy metal ions such as Hg(2+) or Ag(+), iodoacetamide, E-64 and human plasma. Functionally, cysteine protease that plays an important role in the inhibition of host innate immune response. Cleaves host elastins found in connective tissues, pulmonary surfactant protein A in the lungs, and the chemokine receptor CXCR2 on leukocytes. Proteolytic cleavage of surfactant protein A impairs bacterial phagocytosis by neutrophils while CXCR2 degradation blocks neutrophil activation and chemotaxis. Additionally, promotes vascular leakage by activating the plasma kallikerin/kinin system, resulting in hypotension. This is Staphopain A (sspP) from Staphylococcus aureus.